Here is a 75-residue protein sequence, read N- to C-terminus: Peptide Ctri9610 (75 aa).

The first 22 residues, 1 to 22, serve as a signal peptide directing secretion; the sequence is MNSKYLFVFLILNVIFIDLCQG. Lys-41 is modified (lysine amide). The propeptide occupies 42-75; sequence GTRRRELGSQYDYLQDFRKRELDLDDLLSKFPDY.

Belongs to the non-disulfide-bridged peptide (NDBP) superfamily. Short antimicrobial peptide (group 4) family. Expressed by the venom gland.

Its subcellular location is the secreted. The protein is Peptide Ctri9610 of Chaerilus tricostatus (Scorpion).